We begin with the raw amino-acid sequence, 750 residues long: Photosystem I P700 chlorophyll a apoprotein A1 (750 aa).

Transmembrane regions (helical) follow at residues 70–93 (VFSA…FHGA), 156–179 (LYCT…FHYH), 195–219 (LNHH…HVSL), 291–309 (IAHH…GHMY), 346–369 (WHAQ…HHMY), 385–411 (LSLF…IFMV), 433–455 (AIIS…LYIH), and 531–549 (FLVH…LILL). Positions 573 and 582 each coordinate [4Fe-4S] cluster. 2 helical membrane passes run 589 to 610 (HVFL…HFSW) and 664 to 686 (LSAY…MFLF). Histidine 675 lines the chlorophyll a' pocket. 2 residues coordinate chlorophyll a: methionine 683 and tyrosine 691. Tryptophan 692 is a phylloquinone binding site. Residues 724–744 (AVGVTHYLLGGIATTWAFFLA) traverse the membrane as a helical segment.

Belongs to the PsaA/PsaB family. In terms of assembly, the PsaA/B heterodimer binds the P700 chlorophyll special pair and subsequent electron acceptors. PSI consists of a core antenna complex that captures photons, and an electron transfer chain that converts photonic excitation into a charge separation. The eukaryotic PSI reaction center is composed of at least 11 subunits. It depends on P700 is a chlorophyll a/chlorophyll a' dimer, A0 is one or more chlorophyll a, A1 is one or both phylloquinones and FX is a shared 4Fe-4S iron-sulfur center. as a cofactor.

It localises to the plastid. Its subcellular location is the chloroplast thylakoid membrane. The catalysed reaction is reduced [plastocyanin] + hnu + oxidized [2Fe-2S]-[ferredoxin] = oxidized [plastocyanin] + reduced [2Fe-2S]-[ferredoxin]. In terms of biological role, psaA and PsaB bind P700, the primary electron donor of photosystem I (PSI), as well as the electron acceptors A0, A1 and FX. PSI is a plastocyanin-ferredoxin oxidoreductase, converting photonic excitation into a charge separation, which transfers an electron from the donor P700 chlorophyll pair to the spectroscopically characterized acceptors A0, A1, FX, FA and FB in turn. Oxidized P700 is reduced on the lumenal side of the thylakoid membrane by plastocyanin. This is Photosystem I P700 chlorophyll a apoprotein A1 from Liriodendron tulipifera (Tuliptree).